Consider the following 105-residue polypeptide: MLMPKQERNKIHQYLFQEGVVVAKKDFNQAKHEEIDTKNLYVIKALQSLTSKGYVKTQFSWQYYYYTLTEEGVEYLREYLNLPEHIVPGTYIQERNPSQRPQRRY.

It belongs to the eukaryotic ribosomal protein eS10 family. As to quaternary structure, component of the small ribosomal subunit (SSU). Mature yeast ribosomes consist of a small (40S) and a large (60S) subunit. The 40S small subunit contains 1 molecule of ribosomal RNA (18S rRNA) and 33 different proteins (encoded by 57 genes). The large 60S subunit contains 3 rRNA molecules (25S, 5.8S and 5S rRNA) and 46 different proteins (encoded by 81 genes). eS10 interacts with GCN1 (via middle region); this interaction is direct and promotes GCN2 kinase activity. The N-terminus is not modified.

The protein resides in the cytoplasm. Functionally, component of the ribosome, a large ribonucleoprotein complex responsible for the synthesis of proteins in the cell. The small ribosomal subunit (SSU) binds messenger RNAs (mRNAs) and translates the encoded message by selecting cognate aminoacyl-transfer RNA (tRNA) molecules. The large subunit (LSU) contains the ribosomal catalytic site termed the peptidyl transferase center (PTC), which catalyzes the formation of peptide bonds, thereby polymerizing the amino acids delivered by tRNAs into a polypeptide chain. The nascent polypeptides leave the ribosome through a tunnel in the LSU and interact with protein factors that function in enzymatic processing, targeting, and the membrane insertion of nascent chains at the exit of the ribosomal tunnel. eS10 plays a role as a positive regulator of the GCN2 kinase activity by stimulating GCN1-mediated GCN2 activation. The chain is Small ribosomal subunit protein eS10B from Saccharomyces cerevisiae (strain ATCC 204508 / S288c) (Baker's yeast).